The chain runs to 388 residues: Succinate--CoA ligase [ADP-forming] subunit beta (388 aa).

The ATP-grasp domain occupies 9–244; the sequence is KQLFARYGLP…PSQEDSREAH (236 aa). ATP-binding positions include Lys-46, 53-55, Glu-99, Thr-102, and Glu-107; that span reads GRG. Mg(2+)-binding residues include Asn-199 and Asp-213. Substrate is bound by residues Asn-264 and 321 to 323; that span reads GIV.

This sequence belongs to the succinate/malate CoA ligase beta subunit family. As to quaternary structure, heterotetramer of two alpha and two beta subunits. Requires Mg(2+) as cofactor.

The enzyme catalyses succinate + ATP + CoA = succinyl-CoA + ADP + phosphate. It catalyses the reaction GTP + succinate + CoA = succinyl-CoA + GDP + phosphate. Its pathway is carbohydrate metabolism; tricarboxylic acid cycle; succinate from succinyl-CoA (ligase route): step 1/1. Succinyl-CoA synthetase functions in the citric acid cycle (TCA), coupling the hydrolysis of succinyl-CoA to the synthesis of either ATP or GTP and thus represents the only step of substrate-level phosphorylation in the TCA. The beta subunit provides nucleotide specificity of the enzyme and binds the substrate succinate, while the binding sites for coenzyme A and phosphate are found in the alpha subunit. The protein is Succinate--CoA ligase [ADP-forming] subunit beta of Pectobacterium atrosepticum (strain SCRI 1043 / ATCC BAA-672) (Erwinia carotovora subsp. atroseptica).